The primary structure comprises 65 residues: PDTKCVCCQDGKQCPCAGQECCITGKCCKDGASVCCGTCSNAACKCTGGCKCEGGCVCTEGNCTC.

This sequence belongs to the metallothionein superfamily. Type 4 family.

Its function is as follows. Metallothioneins have a high content of cysteine residues that bind various heavy metals. This chain is Metallothionein, found in Paracentrotus lividus (Common sea urchin).